The following is a 168-amino-acid chain: Small ribosomal subunit protein uS5 (168 aa).

Positions 13-76 constitute an S5 DRBM domain; the sequence is IQEKLVAVRR…ENARRNMISV (64 aa).

The protein belongs to the universal ribosomal protein uS5 family. In terms of assembly, part of the 30S ribosomal subunit. Contacts proteins S4 and S8.

In terms of biological role, with S4 and S12 plays an important role in translational accuracy. Its function is as follows. Located at the back of the 30S subunit body where it stabilizes the conformation of the head with respect to the body. This Coxiella burnetii (strain RSA 493 / Nine Mile phase I) protein is Small ribosomal subunit protein uS5.